Consider the following 213-residue polypeptide: Large ribosomal subunit protein bL25 (213 aa).

The segment covering 191 to 207 has biased composition (low complexity); the sequence is AEPTDAPTAPAAAPGAE. Residues 191–213 form a disordered region; it reads AEPTDAPTAPAAAPGAEAPKDKA.

This sequence belongs to the bacterial ribosomal protein bL25 family. CTC subfamily. As to quaternary structure, part of the 50S ribosomal subunit; part of the 5S rRNA/L5/L18/L25 subcomplex. Contacts the 5S rRNA. Binds to the 5S rRNA independently of L5 and L18.

Its function is as follows. This is one of the proteins that binds to the 5S RNA in the ribosome where it forms part of the central protuberance. This chain is Large ribosomal subunit protein bL25, found in Polynucleobacter asymbioticus (strain DSM 18221 / CIP 109841 / QLW-P1DMWA-1) (Polynucleobacter necessarius subsp. asymbioticus).